The primary structure comprises 76 residues: Acyl carrier protein (76 aa).

Residues 2-76 (KDNFTRLQSI…QDVLNYLERN (75 aa)) form the Carrier domain. S37 bears the O-(pantetheine 4'-phosphoryl)serine mark.

It belongs to the acyl carrier protein (ACP) family. Post-translationally, 4'-phosphopantetheine is transferred from CoA to a specific serine of apo-ACP by AcpS. This modification is essential for activity because fatty acids are bound in thioester linkage to the sulfhydryl of the prosthetic group.

The protein localises to the plastid. Its subcellular location is the chloroplast. It participates in lipid metabolism; fatty acid biosynthesis. Carrier of the growing fatty acid chain in fatty acid biosynthesis. In Phaeodactylum tricornutum (strain CCAP 1055/1), this protein is Acyl carrier protein.